The chain runs to 103 residues: N(4)-acetylcytidine amidohydrolase (103 aa).

Positions 6–101 (ITFFQRFQDD…QTQFYVIEFK (96 aa)) constitute an ASCH domain. The active-site Proton acceptor is the lysine 21. Threonine 24 acts as the Nucleophile in catalysis. Glutamate 74 functions as the Proton donor in the catalytic mechanism.

This sequence belongs to the N(4)-acetylcytidine amidohydrolase family.

It catalyses the reaction N(4)-acetylcytidine + H2O = cytidine + acetate + H(+). The enzyme catalyses N(4)-acetyl-2'-deoxycytidine + H2O = 2'-deoxycytidine + acetate + H(+). It carries out the reaction N(4)-acetylcytosine + H2O = cytosine + acetate + H(+). In terms of biological role, catalyzes the hydrolysis of N(4)-acetylcytidine (ac4C). This Escherichia fergusonii (strain ATCC 35469 / DSM 13698 / CCUG 18766 / IAM 14443 / JCM 21226 / LMG 7866 / NBRC 102419 / NCTC 12128 / CDC 0568-73) protein is N(4)-acetylcytidine amidohydrolase (yqfB).